A 405-amino-acid chain; its full sequence is Beta-citrylglutamate synthase B (405 aa).

The region spanning 115 to 300 (FQELAGHGVP…VAGIVADFVL (186 aa)) is the ATP-grasp domain. Residues lysine 154, 189 to 199 (QEYVKESHGRD), and arginine 215 contribute to the ATP site. Mg(2+) is bound by residues aspartate 260, glutamate 273, and asparagine 275. Residues aspartate 260, glutamate 273, and asparagine 275 each coordinate Mn(2+). A disordered region spans residues 359 to 387 (AMSTMSTSSTSSESEADLTETGPTPVGAN). The segment covering 360 to 371 (MSTMSTSSTSSE) has biased composition (low complexity).

This sequence belongs to the RimK family. It depends on Mg(2+) as a cofactor. Requires Mn(2+) as cofactor.

Its subcellular location is the cytoplasm. It catalyses the reaction citrate + L-glutamate + ATP = beta-citrylglutamate + ADP + phosphate + H(+). The catalysed reaction is N-acetyl-L-aspartate + L-glutamate + ATP = N-acetyl-L-aspartyl-L-glutamate + ADP + phosphate + H(+). Catalyzes the synthesis of beta-citryl-L-glutamate and N-acetyl-L-aspartyl-L-glutamate. Beta-citryl-L-glutamate is synthesized more efficiently than N-acetyl-L-aspartyl-L-glutamate. In Danio rerio (Zebrafish), this protein is Beta-citrylglutamate synthase B (rimklb).